The chain runs to 345 residues: CRISPR-associated endonuclease Cas1 1 (345 aa).

The a divalent metal cation site is built by Glu168, His239, and Glu254.

The protein belongs to the CRISPR-associated endonuclease Cas1 family. Forms a heterotetramer with a Cas2 homodimer. Homodimer. The cofactor is a divalent metal cation.

Functionally, CRISPR (clustered regularly interspaced short palindromic repeat), is an adaptive immune system that provides protection against mobile genetic elements (viruses, transposable elements and conjugative plasmids). CRISPR clusters contain sequences complementary to antecedent mobile elements and target invading nucleic acids. CRISPR clusters are transcribed and processed into CRISPR RNA (crRNA). Involved in the integration of spacer DNA into the CRISPR cassette. Acts as a dsDNA and ssRNA nuclease, binds to linear and circular dsDNA and linear ssRNA and ssDNA. This Archaeoglobus fulgidus (strain ATCC 49558 / DSM 4304 / JCM 9628 / NBRC 100126 / VC-16) protein is CRISPR-associated endonuclease Cas1 1.